The following is a 249-amino-acid chain: Sec-independent protein translocase protein TatC (249 aa).

6 consecutive transmembrane segments (helical) span residues 18 to 38, 69 to 89, 96 to 116, 151 to 171, 187 to 207, and 208 to 228; these read VSVG…KNIF, AIVI…APGL, VILP…AFSY, LILG…LAKV, IVVI…SQIF, and MALP…MVNP.

This sequence belongs to the TatC family. The Tat system comprises two distinct complexes: a TatABC complex, containing multiple copies of TatA, TatB and TatC subunits, and a separate TatA complex, containing only TatA subunits. Substrates initially bind to the TatABC complex, which probably triggers association of the separate TatA complex to form the active translocon.

It localises to the cell inner membrane. Part of the twin-arginine translocation (Tat) system that transports large folded proteins containing a characteristic twin-arginine motif in their signal peptide across membranes. Together with TatB, TatC is part of a receptor directly interacting with Tat signal peptides. This is Sec-independent protein translocase protein TatC from Helicobacter pylori (strain J99 / ATCC 700824) (Campylobacter pylori J99).